Consider the following 127-residue polypeptide: Mitochondrial pyruvate carrier 2 (127 aa).

Over 2–40 (AAAGARGLRATYHRLMDKVELLLPKKLRPLYNHPAGPRT) the chain is Mitochondrial matrix. Lys-26 is subject to N6-acetyllysine. The helical transmembrane segment at 41–61 (VFFWAPIMKWGLVCAGLADMA) threads the bilayer. The Mitochondrial intermembrane segment spans residues 62–72 (RPAEKLSTAQS). A helical membrane pass occupies residues 73–90 (TVLMATGFIWSRYSLVII). Residues 91–92 (PK) lie on the Mitochondrial matrix side of the membrane. The helical transmembrane segment at 93–115 (NWSLFAVNFFVGSAGASQLFRIW) threads the bilayer. The Mitochondrial intermembrane segment spans residues 116–127 (RYNQELKSKGIQ).

Belongs to the mitochondrial pyruvate carrier (MPC) (TC 2.A.105) family. In terms of assembly, homodimer. Homooligomer. Forms heterodimers with MPC1 and MPC1L. The heterodimer is the more stable and dominant form.

The protein localises to the mitochondrion inner membrane. It carries out the reaction pyruvate(out) + H(+)(out) = pyruvate(in) + H(+)(in). Its function is as follows. Mediates the uptake of pyruvate into mitochondria. The sequence is that of Mitochondrial pyruvate carrier 2 (Mpc2) from Mus musculus (Mouse).